The chain runs to 135 residues: Large ribosomal subunit protein eL32 (135 aa).

A Glycyl lysine isopeptide (Lys-Gly) (interchain with G-Cter in SUMO2) cross-link involves residue K9. N6-succinyllysine is present on K50. The residue at position 62 (S62) is a Phosphoserine.

This sequence belongs to the eukaryotic ribosomal protein eL32 family. Component of the large ribosomal subunit.

Its subcellular location is the cytoplasm. In terms of biological role, component of the large ribosomal subunit. The ribosome is a large ribonucleoprotein complex responsible for the synthesis of proteins in the cell. This chain is Large ribosomal subunit protein eL32 (RPL32), found in Macaca fascicularis (Crab-eating macaque).